The chain runs to 155 residues: Phosphoprotein pp24 (155 aa).

Positions 1–50 are disordered; it reads MEFEAEHEGLTASWVAPAPQGGKGAEGRAGVADEAGHGKTEAECAEDGEK. Basic and acidic residues predominate over residues 34–50; it reads EAGHGKTEAECAEDGEK. Positions 76-107 form a coiled coil; the sequence is RKRIEAKYMDLLVEAERENKNLRKKYNIILDV.

This chain is Phosphoprotein pp24 (MDV008), found in Gallus gallus (Chicken).